The primary structure comprises 464 residues: UDP-N-acetylmuramate--L-alanine ligase (464 aa).

115-121 (GSHGKTT) is a binding site for ATP.

It belongs to the MurCDEF family.

It is found in the cytoplasm. It catalyses the reaction UDP-N-acetyl-alpha-D-muramate + L-alanine + ATP = UDP-N-acetyl-alpha-D-muramoyl-L-alanine + ADP + phosphate + H(+). Its pathway is cell wall biogenesis; peptidoglycan biosynthesis. Its function is as follows. Cell wall formation. The sequence is that of UDP-N-acetylmuramate--L-alanine ligase from Pelagibacter ubique (strain HTCC1062).